An 836-amino-acid polypeptide reads, in one-letter code: Translation initiation factor IF-2 (836 aa).

The disordered stretch occupies residues 1 to 233 (MSDTDGKKPL…RSLAAMKRKQ (233 aa)). Over residues 18 to 27 (SGQVKQSFSH) the composition is skewed to polar residues. Residues 50–60 (SGSSTTTSSPS) are compositionally biased toward low complexity. Basic and acidic residues predominate over residues 88–156 (KLREVEDAKR…AARRAEEAKR (69 aa)). Over residues 167 to 176 (PAESRASAPP) the composition is skewed to low complexity. The span at 185 to 206 (SRKEREREADRDRTTKKDDSRR) shows a compositional bias: basic and acidic residues. In terms of domain architecture, tr-type G spans 333-501 (PRPPIITIMG…NIALQAEILD (169 aa)). Residues 342-349 (GHVDHGKT) are G1. 342 to 349 (GHVDHGKT) is a GTP binding site. A G2 region spans residues 367-371 (GITQH). The segment at 389 to 392 (DTPG) is G3. GTP-binding positions include 389–393 (DTPGH) and 443–446 (NKID). A G4 region spans residues 443-446 (NKID). The G5 stretch occupies residues 479 to 481 (SAK).

It belongs to the TRAFAC class translation factor GTPase superfamily. Classic translation factor GTPase family. IF-2 subfamily.

The protein resides in the cytoplasm. Functionally, one of the essential components for the initiation of protein synthesis. Protects formylmethionyl-tRNA from spontaneous hydrolysis and promotes its binding to the 30S ribosomal subunits. Also involved in the hydrolysis of GTP during the formation of the 70S ribosomal complex. This is Translation initiation factor IF-2 from Cereibacter sphaeroides (strain ATCC 17023 / DSM 158 / JCM 6121 / CCUG 31486 / LMG 2827 / NBRC 12203 / NCIMB 8253 / ATH 2.4.1.) (Rhodobacter sphaeroides).